The chain runs to 131 residues: MSMTDPIADMLTRVRNAQRAEKAEVSMPSSKIKQAIANVLKEEGYIESFEVGGDEKKPELKISLRYYQGEPVIRELERASSPGLRLFKDKGSLPRVRNGLGVAIVSTSKGVMTDRAAREAGHGGEVLCYVF.

Belongs to the universal ribosomal protein uS8 family. Part of the 30S ribosomal subunit. Contacts proteins S5 and S12.

One of the primary rRNA binding proteins, it binds directly to 16S rRNA central domain where it helps coordinate assembly of the platform of the 30S subunit. This chain is Small ribosomal subunit protein uS8, found in Alkalilimnicola ehrlichii (strain ATCC BAA-1101 / DSM 17681 / MLHE-1).